Consider the following 391-residue polypeptide: 8-amino-7-oxononanoate synthase (391 aa).

Arg19 is a substrate binding site. 106 to 107 (GY) serves as a coordination point for pyridoxal 5'-phosphate. His131 provides a ligand contact to substrate. Ser178, His206, and Thr234 together coordinate pyridoxal 5'-phosphate. N6-(pyridoxal phosphate)lysine is present on Lys237. Thr353 serves as a coordination point for substrate.

Belongs to the class-II pyridoxal-phosphate-dependent aminotransferase family. BioF subfamily. As to quaternary structure, homodimer. Requires pyridoxal 5'-phosphate as cofactor.

The enzyme catalyses 6-carboxyhexanoyl-[ACP] + L-alanine + H(+) = (8S)-8-amino-7-oxononanoate + holo-[ACP] + CO2. It participates in cofactor biosynthesis; biotin biosynthesis. In terms of biological role, catalyzes the decarboxylative condensation of pimeloyl-[acyl-carrier protein] and L-alanine to produce 8-amino-7-oxononanoate (AON), [acyl-carrier protein], and carbon dioxide. The polypeptide is 8-amino-7-oxononanoate synthase (Pelobacter propionicus (strain DSM 2379 / NBRC 103807 / OttBd1)).